We begin with the raw amino-acid sequence, 171 residues long: Large ribosomal subunit protein bL9 (171 aa).

The protein belongs to the bacterial ribosomal protein bL9 family.

Functionally, binds to the 23S rRNA. The polypeptide is Large ribosomal subunit protein bL9 (Rickettsia peacockii (strain Rustic)).